A 387-amino-acid polypeptide reads, in one-letter code: Acetylornithine aminotransferase (387 aa).

Residues 97–98 and phenylalanine 130 contribute to the pyridoxal 5'-phosphate site; that span reads GT. A N(2)-acetyl-L-ornithine-binding site is contributed by arginine 133. Residue 215 to 218 participates in pyridoxal 5'-phosphate binding; the sequence is DEVQ. Lysine 244 is subject to N6-(pyridoxal phosphate)lysine. Position 273 (threonine 273) interacts with pyridoxal 5'-phosphate.

The protein belongs to the class-III pyridoxal-phosphate-dependent aminotransferase family. ArgD subfamily. In terms of assembly, homodimer. Pyridoxal 5'-phosphate serves as cofactor.

It localises to the cytoplasm. The catalysed reaction is N(2)-acetyl-L-ornithine + 2-oxoglutarate = N-acetyl-L-glutamate 5-semialdehyde + L-glutamate. It functions in the pathway amino-acid biosynthesis; L-arginine biosynthesis; N(2)-acetyl-L-ornithine from L-glutamate: step 4/4. The protein is Acetylornithine aminotransferase of Clostridium acetobutylicum (strain ATCC 824 / DSM 792 / JCM 1419 / IAM 19013 / LMG 5710 / NBRC 13948 / NRRL B-527 / VKM B-1787 / 2291 / W).